Consider the following 103-residue polypeptide: Urease subunit beta (103 aa).

Belongs to the urease beta subunit family. In terms of assembly, heterotrimer of UreA (gamma), UreB (beta) and UreC (alpha) subunits. Three heterotrimers associate to form the active enzyme.

The protein localises to the cytoplasm. It catalyses the reaction urea + 2 H2O + H(+) = hydrogencarbonate + 2 NH4(+). Its pathway is nitrogen metabolism; urea degradation; CO(2) and NH(3) from urea (urease route): step 1/1. The sequence is that of Urease subunit beta from Streptomyces avermitilis (strain ATCC 31267 / DSM 46492 / JCM 5070 / NBRC 14893 / NCIMB 12804 / NRRL 8165 / MA-4680).